We begin with the raw amino-acid sequence, 214 residues long: Large ribosomal subunit protein uL3 (214 aa).

Residues 133–154 (GLGAGHGTQRKHRSPGSIGGCA) are disordered.

It belongs to the universal ribosomal protein uL3 family. Part of the 50S ribosomal subunit. Forms a cluster with proteins L14 and L19.

Its function is as follows. One of the primary rRNA binding proteins, it binds directly near the 3'-end of the 23S rRNA, where it nucleates assembly of the 50S subunit. This chain is Large ribosomal subunit protein uL3, found in Streptomyces avermitilis (strain ATCC 31267 / DSM 46492 / JCM 5070 / NBRC 14893 / NCIMB 12804 / NRRL 8165 / MA-4680).